A 197-amino-acid polypeptide reads, in one-letter code: Holliday junction branch migration complex subunit RuvA (197 aa).

The interval 1 to 63 (MFEYLNGKLV…EDAHSLYGFV (63 aa)) is domain I. The segment at 64–142 (NEAEKALFLR…ATGTVGISLL (79 aa)) is domain II. Residues 142-146 (LDAGP) form a flexible linker region. The domain III stretch occupies residues 147-197 (AGNLALEEAIEALQALGYKATELKKIEKKLAQETGLTSEEYIKSALKLMMK).

This sequence belongs to the RuvA family. As to quaternary structure, homotetramer. Forms an RuvA(8)-RuvB(12)-Holliday junction (HJ) complex. HJ DNA is sandwiched between 2 RuvA tetramers; dsDNA enters through RuvA and exits via RuvB. An RuvB hexamer assembles on each DNA strand where it exits the tetramer. Each RuvB hexamer is contacted by two RuvA subunits (via domain III) on 2 adjacent RuvB subunits; this complex drives branch migration. In the full resolvosome a probable DNA-RuvA(4)-RuvB(12)-RuvC(2) complex forms which resolves the HJ.

The protein localises to the cytoplasm. Its function is as follows. The RuvA-RuvB-RuvC complex processes Holliday junction (HJ) DNA during genetic recombination and DNA repair, while the RuvA-RuvB complex plays an important role in the rescue of blocked DNA replication forks via replication fork reversal (RFR). RuvA specifically binds to HJ cruciform DNA, conferring on it an open structure. The RuvB hexamer acts as an ATP-dependent pump, pulling dsDNA into and through the RuvAB complex. HJ branch migration allows RuvC to scan DNA until it finds its consensus sequence, where it cleaves and resolves the cruciform DNA. The polypeptide is Holliday junction branch migration complex subunit RuvA (Lactococcus lactis subsp. lactis (strain IL1403) (Streptococcus lactis)).